Consider the following 335-residue polypeptide: Urokinase plasminogen activator surface receptor (335 aa).

The signal sequence occupies residues 1–22 (MGHPPLLPLLLLLHTCVPASWG). 3 consecutive UPAR/Ly6 domains span residues 23–114 (LRCM…RSRY), 115–213 (LECI…PQNG), and 214–305 (RQCY…YRSG). Disulfide bonds link Cys25-Cys46, Cys28-Cys34, and Cys39-Cys67. The N-linked (GlcNAc...) asparagine glycan is linked to Asn74. 11 disulfide bridges follow: Cys93–Cys98, Cys117–Cys144, Cys120–Cys127, Cys137–Cys169, Cys175–Cys192, Cys193–Cys198, Cys216–Cys244, Cys219–Cys227, Cys237–Cys263, Cys269–Cys287, and Cys288–Cys293. The N-linked (GlcNAc...) asparagine glycan is linked to Asn124. Asn184, Asn194, Asn222, and Asn255 each carry an N-linked (GlcNAc...) asparagine glycan. The GPI-anchor amidated glycine moiety is linked to residue Gly305. The propeptide at 306–335 (AAPQPGPAHLSLTITLLMTARLWGGTLLWT) is removed in mature form.

In terms of assembly, monomer. Interacts (via the UPAR/Ly6 domains) with SRPX2. Interacts with MRC2. Interacts with FAP (seprase); the interaction occurs at the cell surface of invadopodia membrane. Interacts with SORL1 (via N-terminal ectodomain); this interaction decreases PLAUR internalization. The ternary complex composed of PLAUR-PLAU-SERPINE1 also interacts with SORL1. Interacts with CD82; this interaction prevents PLAUR from binding to its high affinity ligand PLAU.

It localises to the cell membrane. It is found in the cell projection. The protein resides in the invadopodium membrane. Acts as a receptor for urokinase plasminogen activator. Plays a role in localizing and promoting plasmin formation. Mediates the proteolysis-independent signal transduction activation effects of U-PA. It is subject to negative-feedback regulation by U-PA which cleaves it into an inactive form. This is Urokinase plasminogen activator surface receptor (PLAUR) from Pan troglodytes (Chimpanzee).